We begin with the raw amino-acid sequence, 213 residues long: Pyrrolidone-carboxylate peptidase (213 aa).

Catalysis depends on residues glutamate 78, cysteine 141, and histidine 165.

Belongs to the peptidase C15 family. As to quaternary structure, homotetramer.

It is found in the cytoplasm. The enzyme catalyses Release of an N-terminal pyroglutamyl group from a polypeptide, the second amino acid generally not being Pro.. In terms of biological role, removes 5-oxoproline from various penultimate amino acid residues except L-proline. This is Pyrrolidone-carboxylate peptidase from Enterococcus faecalis (strain ATCC 700802 / V583).